The sequence spans 56 residues: Small ribosomal subunit protein uS14 (56 aa).

Position 9 is a phosphoserine (S9). Residue R12 is modified to Omega-N-methylarginine. Zn(2+)-binding residues include C21, C24, C39, and C42. K48 carries the post-translational modification N6-acetyllysine.

It belongs to the universal ribosomal protein uS14 family. In terms of assembly, component of the 40S small ribosomal subunit. It depends on Zn(2+) as a cofactor.

It is found in the cytoplasm. Its subcellular location is the cytosol. The protein localises to the rough endoplasmic reticulum. In terms of biological role, component of the small ribosomal subunit. The ribosome is a large ribonucleoprotein complex responsible for the synthesis of proteins in the cell. The protein is Small ribosomal subunit protein uS14 (Rps29) of Mus musculus (Mouse).